A 638-amino-acid chain; its full sequence is Octopamine receptor 1 (638 aa).

Residues 1-28 lie on the Extracellular side of the membrane; sequence MSRDIFMKRLRLHLLFDEVAMVTHIVGD. Residues 29–53 traverse the membrane as a helical segment; it reads VLSSVLLCAVVLLVLVGNTLVVAAV. Topologically, residues 54–64 are cytoplasmic; it reads ATSRKLRTVTN. A helical membrane pass occupies residues 65-87; the sequence is VFIVNLACADLLLGVLVLPFSAV. Over 88–102 the chain is Extracellular; the sequence is NEIKDVWIFGHVWCQ. Cys101 and Cys230 are joined by a disulfide. A helical membrane pass occupies residues 103 to 124; sequence VWLAVDVWLCTASILNLCCISL. Residues 125–147 are Cytoplasmic-facing; that stretch reads DRYLAITRPIRYPGLMSAKRAKT. The chain crosses the membrane as a helical span at residues 148–167; the sequence is LVAGVWLFSFVICCPPLIGW. The Extracellular segment spans residues 168-239; the sequence is NDGGDGIMDY…CELTNSRGYR (72 aa). N-linked (GlcNAc...) asparagine glycans are attached at residues Asn178, Asn207, and Asn215. A helical membrane pass occupies residues 240-259; the sequence is IYAALGSFFIPMLVMVFFYL. Topologically, residues 260 to 520 are cytoplasmic; sequence QIYRAAVKTI…FNREKKAAKT (261 aa). A helical membrane pass occupies residues 521–545; the sequence is LAIIVGAFIMCWMPFFTIYLVGAFC. The Extracellular segment spans residues 546 to 551; the sequence is ENCISP. Residues 552–575 form a helical membrane-spanning segment; it reads IVFSVAFWLGYCNSAMNPCVYALF. Residues 576 to 638 lie on the Cytoplasmic side of the membrane; it reads SRDFRFAFRK…TASGGNGGYT (63 aa). The tract at residues 618-638 is disordered; that stretch reads DDAKSSSDIGPTASGGNGGYT.

It belongs to the G-protein coupled receptor 1 family. As to expression, expressed in the central nervous system.

It localises to the cell membrane. Its function is as follows. G-protein coupled receptor for octopamine (OA), which is a neurotransmitter, neurohormone, and neuromodulator in invertebrates. Activation of this receptor by octopamine induces an increase in both inositol phosphates and cyclic AMP. The coupling to adenylyl cyclase seems to be less efficient than the coupling to phospholipase C. The rank order of potency for agonists is p-synephrine &gt;= clonidine &gt; p-octopamine = xylometazoline = phenylephrine = oxymetazoline &gt; B-HT920 &gt; serotonin = p-tyramine &gt; epinephrine &gt; norepinephrine &gt; methoxamine = dopamine = histamine. For antagonists, the rank order is yohimbine &gt; chlopromazine / spiperone &gt; phentolamine &gt; mianserine &gt; rauwolscine &gt; prazosin &gt; alprenolol / propanolol &gt; pindolol. The protein is Octopamine receptor 1 of Lymnaea stagnalis (Great pond snail).